Consider the following 102-residue polypeptide: Iron-sulfur cluster assembly protein CyaY (102 aa).

It belongs to the frataxin family.

Functionally, involved in iron-sulfur (Fe-S) cluster assembly. May act as a regulator of Fe-S biogenesis. This chain is Iron-sulfur cluster assembly protein CyaY, found in Histophilus somni (strain 129Pt) (Haemophilus somnus).